Consider the following 685-residue polypeptide: Methionine--tRNA ligase (685 aa).

The 'HIGH' region motif lies at 12 to 22 (PYANGSIHLGH). Residues C143, C146, C156, and C159 each contribute to the Zn(2+) site. A 'KMSKS' region motif is present at residues 339–343 (KMSKS). An ATP-binding site is contributed by K342. The tRNA-binding domain occupies 582-685 (DFMKIDMRVA…AGAQPGDKVG (104 aa)).

Belongs to the class-I aminoacyl-tRNA synthetase family. MetG type 1 subfamily. As to quaternary structure, homodimer. Zn(2+) is required as a cofactor.

The protein resides in the cytoplasm. It carries out the reaction tRNA(Met) + L-methionine + ATP = L-methionyl-tRNA(Met) + AMP + diphosphate. In terms of biological role, is required not only for elongation of protein synthesis but also for the initiation of all mRNA translation through initiator tRNA(fMet) aminoacylation. This is Methionine--tRNA ligase from Neisseria meningitidis serogroup C (strain 053442).